The primary structure comprises 362 residues: Nuclear hormone receptor family member nhr-77 (362 aa).

The nuclear receptor DNA-binding region spans Asp-8–Gln-82. NR C4-type zinc fingers lie at residues Cys-11–Cys-32 and Cys-48–Cys-69. In terms of domain architecture, NR LBD spans Glu-145–Phe-362.

Belongs to the nuclear hormone receptor family.

The protein resides in the nucleus. Its function is as follows. Orphan nuclear receptor. The polypeptide is Nuclear hormone receptor family member nhr-77 (nhr-77) (Caenorhabditis elegans).